The chain runs to 624 residues: Phosphatidylserine decarboxylase proenzyme 2 (624 aa).

A disordered region spans residues M1–E30. Residues G16–L129 form the C2 domain. EF-hand domains are found at residues T156–K191 and L192–K227. The Ca(2+) site is built by D169, N171, D173, E175, E180, D205, N207, D209, and E216. Catalysis depends on charge relay system; for autoendoproteolytic cleavage activity residues D425, H481, and S569. S569 acts as the Schiff-base intermediate with substrate; via pyruvic acid; for decarboxylase activity in catalysis. Residue S569 is modified to Pyruvic acid (Ser); by autocatalysis.

Belongs to the phosphatidylserine decarboxylase family. PSD-B subfamily. Eukaryotic type II sub-subfamily. In terms of assembly, heterodimer of a large membrane-associated beta subunit and a small pyruvoyl-containing alpha subunit. Pyruvate serves as cofactor. In terms of processing, is synthesized initially as an inactive proenzyme. Formation of the active enzyme involves a self-maturation process in which the active site pyruvoyl group is generated from an internal serine residue via an autocatalytic post-translational modification. Two non-identical subunits are generated from the proenzyme in this reaction, and the pyruvate is formed at the N-terminus of the alpha chain, which is derived from the carboxyl end of the proenzyme. The autoendoproteolytic cleavage occurs by a canonical serine protease mechanism, in which the side chain hydroxyl group of the serine supplies its oxygen atom to form the C-terminus of the beta chain, while the remainder of the serine residue undergoes an oxidative deamination to produce ammonia and the pyruvoyl prosthetic group on the alpha chain. During this reaction, the Ser that is part of the protease active site of the proenzyme becomes the pyruvoyl prosthetic group, which constitutes an essential element of the active site of the mature decarboxylase.

It localises to the vacuole membrane. The protein localises to the endoplasmic reticulum membrane. It carries out the reaction a 1,2-diacyl-sn-glycero-3-phospho-L-serine + H(+) = a 1,2-diacyl-sn-glycero-3-phosphoethanolamine + CO2. It participates in phospholipid metabolism; phosphatidylethanolamine biosynthesis; phosphatidylethanolamine from CDP-diacylglycerol: step 2/2. Its function is as follows. Catalyzes the formation of phosphatidylethanolamine (PtdEtn) from phosphatidylserine (PtdSer). Plays a central role in phospholipid metabolism and in the interorganelle trafficking of phosphatidylserine. In Oryza sativa subsp. japonica (Rice), this protein is Phosphatidylserine decarboxylase proenzyme 2.